A 177-amino-acid polypeptide reads, in one-letter code: Large ribosomal subunit protein uL6 (177 aa).

It belongs to the universal ribosomal protein uL6 family. Part of the 50S ribosomal subunit.

Its function is as follows. This protein binds to the 23S rRNA, and is important in its secondary structure. It is located near the subunit interface in the base of the L7/L12 stalk, and near the tRNA binding site of the peptidyltransferase center. This Bordetella avium (strain 197N) protein is Large ribosomal subunit protein uL6.